The chain runs to 89 residues: Cornifin-B (89 aa).

The disordered stretch occupies residues 1–29; it reads MSSQQQKQPCTPPPQLQQQQVKQPCQPPP. A run of 8 repeats spans residues 3 to 14, 18 to 29, 31 to 38, 39 to 46, 47 to 54, 55 to 62, 63 to 70, and 71 to 78. The tract at residues 3-29 is 2 X 12 AA approximate repeats; sequence SQQQKQPCTPPPQLQQQQVKQPCQPPP. Residues 31–78 form a 6 X 8 AA approximate tandem repeats region; sequence EPCIPKTKEPCHPKVPEPCHPKVPEPCQPKVPEPCHPKVPEPCPSIVT.

Belongs to the cornifin (SPRR) family. The N-terminus is blocked. Suprabasal layers of squamous-differentiated tissues such as epidermis, esophagus, tongue and trachea.

Its subcellular location is the cytoplasm. Functionally, cross-linked envelope protein of keratinocytes. It is a keratinocyte protein that first appears in the cell cytosol, but ultimately becomes cross-linked to membrane proteins by transglutaminase. All that results in the formation of an insoluble envelope beneath the plasma membrane. Can function as both amine donor and acceptor in transglutaminase-mediated cross-linkage. In Homo sapiens (Human), this protein is Cornifin-B (SPRR1B).